A 127-amino-acid chain; its full sequence is Interacting with cytoskeleton protein 1 (127 aa).

The protein localises to the vacuole membrane. Functionally, required for viability of cells lacking mtDNA. This is Interacting with cytoskeleton protein 1 (ICY1) from Saccharomyces cerevisiae (strain ATCC 204508 / S288c) (Baker's yeast).